Here is a 364-residue protein sequence, read N- to C-terminus: Histidinol-phosphate aminotransferase 2 (364 aa).

An N6-(pyridoxal phosphate)lysine modification is found at Lys-223.

Belongs to the class-II pyridoxal-phosphate-dependent aminotransferase family. Histidinol-phosphate aminotransferase subfamily. As to quaternary structure, homodimer. Pyridoxal 5'-phosphate serves as cofactor.

It catalyses the reaction L-histidinol phosphate + 2-oxoglutarate = 3-(imidazol-4-yl)-2-oxopropyl phosphate + L-glutamate. The protein operates within amino-acid biosynthesis; L-histidine biosynthesis; L-histidine from 5-phospho-alpha-D-ribose 1-diphosphate: step 7/9. The chain is Histidinol-phosphate aminotransferase 2 (hisC2) from Oceanobacillus iheyensis (strain DSM 14371 / CIP 107618 / JCM 11309 / KCTC 3954 / HTE831).